Here is a 39-residue protein sequence, read N- to C-terminus: Photosystem II reaction center protein J (39 aa).

The chain crosses the membrane as a helical span at residues 7 to 27; it reads IPLWLVATVAGMGVITLLGIF.

Belongs to the PsbJ family. As to quaternary structure, PSII is composed of 1 copy each of membrane proteins PsbA, PsbB, PsbC, PsbD, PsbE, PsbF, PsbH, PsbI, PsbJ, PsbK, PsbL, PsbM, PsbT, PsbX, PsbY, PsbZ, Psb30/Ycf12, peripheral proteins PsbO, CyanoQ (PsbQ), PsbU, PsbV and a large number of cofactors. It forms dimeric complexes.

The protein localises to the cellular thylakoid membrane. Its function is as follows. One of the components of the core complex of photosystem II (PSII). PSII is a light-driven water:plastoquinone oxidoreductase that uses light energy to abstract electrons from H(2)O, generating O(2) and a proton gradient subsequently used for ATP formation. It consists of a core antenna complex that captures photons, and an electron transfer chain that converts photonic excitation into a charge separation. The sequence is that of Photosystem II reaction center protein J from Cyanothece sp. (strain PCC 7425 / ATCC 29141).